Consider the following 325-residue polypeptide: Polyamine aminopropyltransferase (325 aa).

One can recognise a PABS domain in the interval 11–248; sequence SSMAEDFAVE…TLWAMAMASD (238 aa). Glutamine 44 contacts S-methyl-5'-thioadenosine. Spermidine contacts are provided by histidine 75 and aspartate 99. S-methyl-5'-thioadenosine is bound by residues glutamate 119 and 151–152; that span reads DG. Aspartate 169 acts as the Proton acceptor in catalysis. Proline 176 contributes to the S-methyl-5'-thioadenosine binding site.

Belongs to the spermidine/spermine synthase family. As to quaternary structure, homodimer or homotetramer.

The protein resides in the cytoplasm. The catalysed reaction is S-adenosyl 3-(methylsulfanyl)propylamine + putrescine = S-methyl-5'-thioadenosine + spermidine + H(+). It functions in the pathway amine and polyamine biosynthesis; spermidine biosynthesis; spermidine from putrescine: step 1/1. Functionally, catalyzes the irreversible transfer of a propylamine group from the amino donor S-adenosylmethioninamine (decarboxy-AdoMet) to putrescine (1,4-diaminobutane) to yield spermidine. The chain is Polyamine aminopropyltransferase from Nitrosomonas europaea (strain ATCC 19718 / CIP 103999 / KCTC 2705 / NBRC 14298).